We begin with the raw amino-acid sequence, 631 residues long: tRNA 5-methylaminomethyl-2-thiouridine biosynthesis bifunctional protein MnmC (631 aa).

A tRNA (mnm(5)s(2)U34)-methyltransferase region spans residues Met-1 to Pro-243. Residues Ile-261 to Val-631 are FAD-dependent cmnm(5)s(2)U34 oxidoreductase.

In the N-terminal section; belongs to the methyltransferase superfamily. tRNA (mnm(5)s(2)U34)-methyltransferase family. This sequence in the C-terminal section; belongs to the DAO family. The cofactor is FAD.

Its subcellular location is the cytoplasm. It catalyses the reaction 5-aminomethyl-2-thiouridine(34) in tRNA + S-adenosyl-L-methionine = 5-methylaminomethyl-2-thiouridine(34) in tRNA + S-adenosyl-L-homocysteine + H(+). Functionally, catalyzes the last two steps in the biosynthesis of 5-methylaminomethyl-2-thiouridine (mnm(5)s(2)U) at the wobble position (U34) in tRNA. Catalyzes the FAD-dependent demodification of cmnm(5)s(2)U34 to nm(5)s(2)U34, followed by the transfer of a methyl group from S-adenosyl-L-methionine to nm(5)s(2)U34, to form mnm(5)s(2)U34. The polypeptide is tRNA 5-methylaminomethyl-2-thiouridine biosynthesis bifunctional protein MnmC (Marinobacter nauticus (strain ATCC 700491 / DSM 11845 / VT8) (Marinobacter aquaeolei)).